Reading from the N-terminus, the 393-residue chain is MQTIAAIAKLEEILTNNGISAQQALALLTTALPLATTSDPQEPLPPLLRALQTASDRLRQQQVGDTVTYVINRNINFTNICEQHCAFCAFRRDATASDAYWLNIETILSKVAEAVAQGATEICMQGGLNPAAKEGGSSLRYYQFLVREIKTAFPQIHLHAFSPQEIQFIAREDGCSYAQVIAALHEVGVDSMPGTAAEVLVDAVRSKICPEKIRTATWLEIVETAHRLGVWTTSTMLCGHIETPADQMAHLQHLQQLQQKALEHDYPARITEFILLPYVGELAPKAMRQWVGHHQPRLLPTLVLTAVARLFLGQWIVNHQPSWVKLGLRGATMALNWGCNDLGGTLMEEHITSVAGAQGGTGVSPEDLVAAIHSLGRTPQQRTTLYNPVGERQ.

Positions 67–322 (VTYVINRNIN…GQWIVNHQPS (256 aa)) constitute a Radical SAM core domain. Cysteine 81, cysteine 85, and cysteine 88 together coordinate [4Fe-4S] cluster.

The protein belongs to the radical SAM superfamily. CofH family. As to quaternary structure, consists of two subunits, CofG and CofH. The cofactor is [4Fe-4S] cluster.

It catalyses the reaction 5-amino-6-(D-ribitylamino)uracil + L-tyrosine + S-adenosyl-L-methionine = 5-amino-5-(4-hydroxybenzyl)-6-(D-ribitylimino)-5,6-dihydrouracil + 2-iminoacetate + 5'-deoxyadenosine + L-methionine + H(+). The protein operates within cofactor biosynthesis; coenzyme F0 biosynthesis. Functionally, catalyzes the radical-mediated synthesis of 5-amino-5-(4-hydroxybenzyl)-6-(D-ribitylimino)-5,6-dihydrouracil from 5-amino-6-(D-ribitylamino)uracil and L-tyrosine. In Thermosynechococcus vestitus (strain NIES-2133 / IAM M-273 / BP-1), this protein is 5-amino-6-(D-ribitylamino)uracil--L-tyrosine 4-hydroxyphenyl transferase.